Here is a 186-residue protein sequence, read N- to C-terminus: Homeobox expressed in ES cells 1 (186 aa).

The segment at residues 109 to 168 (GRRPRTAFTRSQIEILENVFRVNSYPGIDIREELAGKLALDEDRIQIWFQNRRAKLKRSH) is a DNA-binding region (homeobox).

It belongs to the ANF homeobox family. Interacts (via N-terminus) with zyx.

The protein localises to the nucleus. Functionally, regulates the earliest stages of development of the anterior neural plate. Plays a role in forebrain development by inhibiting the expression of otx2 and pax6 in the rostral region of the anterior neural plate. Necessary for both neural differentiation and neural patterning. Controls Spemann organizer development. May act as a transcriptional repressor. This is Homeobox expressed in ES cells 1 from Xenopus tropicalis (Western clawed frog).